A 432-amino-acid polypeptide reads, in one-letter code: Gamma-glutamyl phosphate reductase (432 aa).

This sequence belongs to the gamma-glutamyl phosphate reductase family.

It is found in the cytoplasm. It catalyses the reaction L-glutamate 5-semialdehyde + phosphate + NADP(+) = L-glutamyl 5-phosphate + NADPH + H(+). Its pathway is amino-acid biosynthesis; L-proline biosynthesis; L-glutamate 5-semialdehyde from L-glutamate: step 2/2. Its function is as follows. Catalyzes the NADPH-dependent reduction of L-glutamate 5-phosphate into L-glutamate 5-semialdehyde and phosphate. The product spontaneously undergoes cyclization to form 1-pyrroline-5-carboxylate. The chain is Gamma-glutamyl phosphate reductase from Ruminiclostridium cellulolyticum (strain ATCC 35319 / DSM 5812 / JCM 6584 / H10) (Clostridium cellulolyticum).